The chain runs to 387 residues: Alkanesulfonate monooxygenase (387 aa).

This sequence belongs to the SsuD family.

It carries out the reaction an alkanesulfonate + FMNH2 + O2 = an aldehyde + FMN + sulfite + H2O + 2 H(+). In terms of biological role, catalyzes the desulfonation of aliphatic sulfonates. This is Alkanesulfonate monooxygenase from Cupriavidus metallidurans (strain ATCC 43123 / DSM 2839 / NBRC 102507 / CH34) (Ralstonia metallidurans).